A 96-amino-acid chain; its full sequence is Putative pterin-4-alpha-carbinolamine dehydratase (96 aa).

The protein belongs to the pterin-4-alpha-carbinolamine dehydratase family.

It carries out the reaction (4aS,6R)-4a-hydroxy-L-erythro-5,6,7,8-tetrahydrobiopterin = (6R)-L-erythro-6,7-dihydrobiopterin + H2O. The chain is Putative pterin-4-alpha-carbinolamine dehydratase from Paraburkholderia xenovorans (strain LB400).